The sequence spans 335 residues: GTPase Obg (335 aa).

One can recognise an Obg domain in the interval 1–158; that stretch reads MFVDQITLEL…RQVELELKLI (158 aa). The segment at 126–145 is disordered; sequence NTFFKTSVNRAPTKATPGKP. Positions 159–334 constitute an OBG-type G domain; the sequence is ADIGLVGFPN…LYRFFTQRLA (176 aa). Residues 165–172, 190–194, 215–218, 285–288, and 315–317 contribute to the GTP site; these read GFPNAGKS, FTTLA, DIPG, NKID, and SGL. Residues serine 172 and threonine 192 each contribute to the Mg(2+) site.

This sequence belongs to the TRAFAC class OBG-HflX-like GTPase superfamily. OBG GTPase family. In terms of assembly, monomer. Mg(2+) is required as a cofactor.

It localises to the cytoplasm. An essential GTPase which binds GTP, GDP and possibly (p)ppGpp with moderate affinity, with high nucleotide exchange rates and a fairly low GTP hydrolysis rate. Plays a role in control of the cell cycle, stress response, ribosome biogenesis and in those bacteria that undergo differentiation, in morphogenesis control. In Chlamydia pneumoniae (Chlamydophila pneumoniae), this protein is GTPase Obg.